A 718-amino-acid polypeptide reads, in one-letter code: Threonine--tRNA ligase, mitochondrial (718 aa).

Residue Ser-52 is modified to Phosphoserine. One can recognise a TGS domain in the interval 55–121; it reads QKEPRTIKIS…ETDSDLRFLT (67 aa).

The protein belongs to the class-II aminoacyl-tRNA synthetase family. Homodimer.

The protein resides in the mitochondrion matrix. It carries out the reaction tRNA(Thr) + L-threonine + ATP = L-threonyl-tRNA(Thr) + AMP + diphosphate + H(+). Catalyzes the attachment of threonine to tRNA(Thr) in a two-step reaction: threonine is first activated by ATP to form Thr-AMP and then transferred to the acceptor end of tRNA(Thr). Also edits incorrectly charged tRNA(Thr) via its editing domain. The sequence is that of Threonine--tRNA ligase, mitochondrial (TARS2) from Homo sapiens (Human).